We begin with the raw amino-acid sequence, 421 residues long: CinA-like protein (421 aa).

The protein belongs to the CinA family.

In Synechococcus sp. (strain ATCC 27144 / PCC 6301 / SAUG 1402/1) (Anacystis nidulans), this protein is CinA-like protein.